Consider the following 822-residue polypeptide: Probable RING finger protein 207 homolog (822 aa).

An RING-type zinc finger spans residues 8 to 42; it reads CTICKNEFEEPILLSCQHTTCRKCSTGSPSCKSCS. The B box-type 1; atypical zinc finger occupies 68–115; the sequence is EEMEECANCEQISLPMFYCETCQQSLCLVCRNVTHQARMFSSHKIISS. Zn(2+) contacts are provided by C73, C76, C97, and H102. Residues 122 to 164 form a B box-type 2; degenerate zinc finger; it reads YSSSLCKDHNEPYILYCSDVRKLVCIQCFNGRPLEERHSFISI. Coiled coils occupy residues 526–558 and 738–769; these read NSQNRILAIEKEEENRRLNQEAKKKEELAGQSA and DKDEVIEKEEIEKETEKEKKKVIRRRVKKVSE.

This Caenorhabditis elegans protein is Probable RING finger protein 207 homolog.